The sequence spans 340 residues: S-adenosylmethionine:tRNA ribosyltransferase-isomerase (340 aa).

The protein belongs to the QueA family. Monomer.

The protein localises to the cytoplasm. It catalyses the reaction 7-aminomethyl-7-carbaguanosine(34) in tRNA + S-adenosyl-L-methionine = epoxyqueuosine(34) in tRNA + adenine + L-methionine + 2 H(+). It participates in tRNA modification; tRNA-queuosine biosynthesis. Functionally, transfers and isomerizes the ribose moiety from AdoMet to the 7-aminomethyl group of 7-deazaguanine (preQ1-tRNA) to give epoxyqueuosine (oQ-tRNA). The chain is S-adenosylmethionine:tRNA ribosyltransferase-isomerase from Nitratiruptor sp. (strain SB155-2).